Reading from the N-terminus, the 227-residue chain is MTGRFDWRGQGGHTEASTKAIVFVVEDDISMRRSLTNLFRSVGLEVVAFGSAREMLQSTMPDVTSCLVLDVRLPGLSGLDYQTELARLNIHIPIIFITGHGDIPMTVRAMKGGAVDFLSKPFRDQELLDAVVAATERDRKRREAQRTVANLKSLFETLSPREQAVMKLVATGLMNKQVAAELGLAEITVKIYRGHVMKKMRARSLADLIRMSETLGISANHTEQTQV.

Residues 21–135 form the Response regulatory domain; the sequence is IVFVVEDDIS…ELLDAVVAAT (115 aa). Asp-70 carries the post-translational modification 4-aspartylphosphate. Positions 151-216 constitute an HTH luxR-type domain; sequence LKSLFETLSP…DLIRMSETLG (66 aa). Residues 175–194 constitute a DNA-binding region (H-T-H motif); it reads NKQVAAELGLAEITVKIYRG.

Post-translationally, phosphorylated by NodV.

The protein resides in the cytoplasm. Member of the two-component regulatory system NodV/NodW probably involved in the regulation of the transcription of genes involved in the nodulation process. The sequence is that of Nodulation protein W (nodW) from Bradyrhizobium diazoefficiens (strain JCM 10833 / BCRC 13528 / IAM 13628 / NBRC 14792 / USDA 110).